A 103-amino-acid polypeptide reads, in one-letter code: 6-pyruvoyl tetrahydrobiopterin synthase (103 aa).

The residue at position 1 (alanine 1) is an N-acetylalanine. Zn(2+) is bound at residue histidine 27. Catalysis depends on charge relay system residues histidine 53 and glutamate 92.

This sequence belongs to the PTPS family. In terms of assembly, homohexamer formed of two homotrimers in a head to head fashion. Requires Zn(2+) as cofactor.

It carries out the reaction 7,8-dihydroneopterin 3'-triphosphate = 6-pyruvoyl-5,6,7,8-tetrahydropterin + triphosphate + H(+). Its pathway is cofactor biosynthesis; tetrahydrobiopterin biosynthesis; tetrahydrobiopterin from 7,8-dihydroneopterin triphosphate: step 1/3. In terms of biological role, involved in the biosynthesis of tetrahydrobiopterin, an essential cofactor of aromatic amino acid hydroxylases. Catalyzes the transformation of 7,8-dihydroneopterin triphosphate into 6-pyruvoyl tetrahydropterin. The polypeptide is 6-pyruvoyl tetrahydrobiopterin synthase (pts) (Salmo salar (Atlantic salmon)).